Here is a 478-residue protein sequence, read N- to C-terminus: Zinc finger protein 410 (478 aa).

Residues 187–213 form a disordered region; that stretch reads NAKTSSNGENVHLGSGDGQSKDSGPLP. C2H2-type zinc fingers lie at residues 219-243, 249-273, 279-303, 309-333, and 339-362; these read LKCTVEGCDRTFVWPAHFKYHLKTH, FICPAEGCGKSFYVLQRLKVHMRTH, FMCHESGCGKQFTTAGNLKNHRRIH, FLCEAQGCGRSFAEYSSLRKHLVVH, and HQCQVCGKTFSQSGSRNVHMRKHH. Residues cysteine 221, cysteine 226, histidine 239, histidine 243, cysteine 251, cysteine 256, histidine 269, histidine 273, cysteine 281, cysteine 286, histidine 299, histidine 303, cysteine 311, cysteine 316, histidine 329, histidine 333, cysteine 341, cysteine 344, histidine 357, and histidine 361 each coordinate Zn(2+).

In terms of assembly, interacts with CDKN2A/p14ARF. Post-translationally, sumoylated. Sumoylation increases its half-life, possibly by blocking ubiquitin-mediated degradation. In terms of processing, O-glycosylated. O-GlcNAcylation may occur in response to increasing glucose levels and affect transcription factor activity. Widely expressed.

The protein localises to the nucleus. It localises to the chromosome. Its function is as follows. Transcription factor that binds to the sequence motif 5'-CATCCCATAATA-3', and is specifically required to silence expression of fetal hemoglobin in adult erythroid cells. Prevents expression of fetal hemoglobin genes HBG1 and HBG2 through CHD4: acts as a direct transcriptional activator of CHD4, a central component of the NuRD complex that represses transcription of fetal hemoglobin genes HBG1 and HBG2 in erythroid cells. May also activate transcription of matrix-remodeling genes such as MMP1 during fibroblast senescence. May activate transcription of the gap junction gene GJC1, perhaps in response to increasing glucose. However, recent studies suggest that ZNF410 is dedicated to regulate expression of a single gene: CHD4. This Homo sapiens (Human) protein is Zinc finger protein 410.